We begin with the raw amino-acid sequence, 401 residues long: Putative TRAP transporter large permease protein HI_0050 (401 aa).

11 helical membrane-spanning segments follow: residues 31 to 51, 70 to 90, 115 to 135, 144 to 164, 193 to 213, 217 to 237, 253 to 273, 290 to 310, 330 to 350, 353 to 373, and 375 to 395; these read FPLM…HGGI, LGYV…SAVA, GLIC…PMII, ITKL…GLWV, AFWP…GIFT, AGVV…GLTF, MVMF…VAQI, ILMF…DLIP, IAYF…TPPV, VLYV…KGIA, and FLFV…IVIV.

This sequence belongs to the TRAP transporter large permease family.

Its subcellular location is the cell inner membrane. The polypeptide is Putative TRAP transporter large permease protein HI_0050 (Haemophilus influenzae (strain ATCC 51907 / DSM 11121 / KW20 / Rd)).